The sequence spans 214 residues: Adenylate kinase (214 aa).

10 to 15 (GAGKGT) serves as a coordination point for ATP. An NMP region spans residues 30-59 (STGDMLRAAVKAGTPLGLEAKKVMDAGQLV). AMP is bound by residues threonine 31, arginine 36, 57-59 (QLV), 85-88 (GFPR), and glutamine 92. The LID stretch occupies residues 122–159 (GRRVHPGSGRVYHVVFNPPKVEGKDDVTGEDLAIRPDD). ATP is bound by residues arginine 123 and 132–133 (VY). 2 residues coordinate AMP: arginine 156 and arginine 167. Glutamine 200 is an ATP binding site.

The protein belongs to the adenylate kinase family. Monomer.

The protein resides in the cytoplasm. The enzyme catalyses AMP + ATP = 2 ADP. The protein operates within purine metabolism; AMP biosynthesis via salvage pathway; AMP from ADP: step 1/1. In terms of biological role, catalyzes the reversible transfer of the terminal phosphate group between ATP and AMP. Plays an important role in cellular energy homeostasis and in adenine nucleotide metabolism. The sequence is that of Adenylate kinase from Shewanella sp. (strain ANA-3).